A 214-amino-acid chain; its full sequence is Pyridoxine/pyridoxamine 5'-phosphate oxidase (214 aa).

Residues 8–11 and K67 contribute to the substrate site; that span reads RKSY. FMN-binding positions include 62-67, 77-78, K84, and Q106; these read RVVLLK and YT. Residues Y124, R128, and S132 each coordinate substrate. Residues 141–142 and W186 contribute to the FMN site; that span reads QS. 192–194 contacts substrate; sequence RLH. R196 is a binding site for FMN.

Belongs to the pyridoxamine 5'-phosphate oxidase family. In terms of assembly, homodimer. It depends on FMN as a cofactor.

The catalysed reaction is pyridoxamine 5'-phosphate + O2 + H2O = pyridoxal 5'-phosphate + H2O2 + NH4(+). It carries out the reaction pyridoxine 5'-phosphate + O2 = pyridoxal 5'-phosphate + H2O2. Its pathway is cofactor metabolism; pyridoxal 5'-phosphate salvage; pyridoxal 5'-phosphate from pyridoxamine 5'-phosphate: step 1/1. It functions in the pathway cofactor metabolism; pyridoxal 5'-phosphate salvage; pyridoxal 5'-phosphate from pyridoxine 5'-phosphate: step 1/1. Its function is as follows. Catalyzes the oxidation of either pyridoxine 5'-phosphate (PNP) or pyridoxamine 5'-phosphate (PMP) into pyridoxal 5'-phosphate (PLP). The sequence is that of Pyridoxine/pyridoxamine 5'-phosphate oxidase from Flavobacterium johnsoniae (strain ATCC 17061 / DSM 2064 / JCM 8514 / BCRC 14874 / CCUG 350202 / NBRC 14942 / NCIMB 11054 / UW101) (Cytophaga johnsonae).